A 175-amino-acid chain; its full sequence is MSRVAKKPISVPKGVEVSVRSDMLTVKGVKGVLTFPKSDNVNVVVDGDILTLSANDPSHVSLAGTVRAILSNMIKGVSIGFERKLELVGVGYRASMQGENLNLSLGFSHPLVFVPPEGITLLTPSQTEVVVQGIDKQRVGEVAAKIRSFRPPEPYKGKGLKYAAEAIMRKEAKKA.

It belongs to the universal ribosomal protein uL6 family. As to quaternary structure, part of the 50S ribosomal subunit.

In terms of biological role, this protein binds to the 23S rRNA, and is important in its secondary structure. It is located near the subunit interface in the base of the L7/L12 stalk, and near the tRNA binding site of the peptidyltransferase center. This is Large ribosomal subunit protein uL6 from Xylella fastidiosa (strain 9a5c).